The primary structure comprises 567 residues: Adenine deaminase (567 aa).

It belongs to the metallo-dependent hydrolases superfamily. Adenine deaminase family. Mn(2+) serves as cofactor.

The catalysed reaction is adenine + H2O + H(+) = hypoxanthine + NH4(+). The sequence is that of Adenine deaminase from Methanothrix thermoacetophila (strain DSM 6194 / JCM 14653 / NBRC 101360 / PT) (Methanosaeta thermophila).